Here is a 148-residue protein sequence, read N- to C-terminus: Cytochrome c-type biogenesis protein CcmE (148 aa).

The Cytoplasmic portion of the chain corresponds to M1–R7. Residues L8–A28 traverse the membrane as a helical; Signal-anchor for type II membrane protein segment. Residues F29–Q148 are Periplasmic-facing. Residues H123 and Y127 each contribute to the heme site.

This sequence belongs to the CcmE/CycJ family.

It localises to the cell inner membrane. In terms of biological role, heme chaperone required for the biogenesis of c-type cytochromes. Transiently binds heme delivered by CcmC and transfers the heme to apo-cytochromes in a process facilitated by CcmF and CcmH. The protein is Cytochrome c-type biogenesis protein CcmE of Azoarcus sp. (strain BH72).